We begin with the raw amino-acid sequence, 365 residues long: PHD finger protein 6 (365 aa).

Ser-2 is subject to N-acetylserine. 2 short sequence motifs (nuclear localization signal) span residues 13-16 (RQRK) and 129-133 (RKHKK). The C2HC pre-PHD-type 1 zinc finger occupies 14–52 (QRKCGFCKSNRDKECGQLLISENQKVAAHHKCMLFSSAL). Residues 14-132 (QRKCGFCKSN…IYMVYCRKHK (119 aa)) form an extended PHD1 domain (ePHD1) region. The segment at 80 to 132 (LMCSLCHCPGATIGCDVKTCHRTYHYHCALHDKAQIREKPSQGIYMVYCRKHK) adopts a PHD-type 1 zinc-finger fold. 3 positions are modified to phosphoserine: Ser-138, Ser-145, and Ser-155. The interval 139 to 211 (EADLEESFNE…RSSPSDTRPK (73 aa)) is disordered. The Nucleolar localization signal signature appears at 157-169 (KSKKKSRKGRPRK). Positions 157 to 171 (KSKKKSRKGRPRKTN) are enriched in basic residues. Residue Lys-173 forms a Glycyl lysine isopeptide (Lys-Gly) (interchain with G-Cter in SUMO2) linkage. Residues Ser-183 and Ser-199 each carry the phosphoserine modification. Residues 209-249 (RPKCGFCHVGEEENQARGKLHIFNAKKAAAHYKCMLFSSGT) form a C2HC pre-PHD-type 2 zinc finger. An extended PHD2 domain (ePHD2) region spans residues 209 to 330 (RPKCGFCHVG…IYKLYCKNHS (122 aa)). Lys-227 participates in a covalent cross-link: Glycyl lysine isopeptide (Lys-Gly) (interchain with G-Cter in SUMO2). The PHD-type 2 zinc finger occupies 278-330 (MKCTLCSQPGATIGCEIKACVKTYHYHCGVQDKAKYIENMSRGIYKLYCKNHS). Positions 330-365 (SGNDERDEEDEERESKSRGKVEIDQQQLTQQQLNGN) are disordered. Positions 342–352 (RESKSRGKVEI) are enriched in basic and acidic residues. The span at 354-365 (QQQLTQQQLNGN) shows a compositional bias: low complexity. At Thr-358 the chain carries Phosphothreonine.

In terms of assembly, interacts with UBTF. Interacts with the NuRD complex component RBBP4 (via the nucleolar localization motif), the interaction mediates transcriptional repression activity.

The protein localises to the nucleus. The protein resides in the nucleolus. It localises to the chromosome. It is found in the centromere. Its subcellular location is the kinetochore. Transcriptional regulator that associates with ribosomal RNA promoters and suppresses ribosomal RNA (rRNA) transcription. This Bos taurus (Bovine) protein is PHD finger protein 6 (PHF6).